Consider the following 491-residue polypeptide: Transcriptional regulatory protein dep1 (491 aa).

Disordered stretches follow at residues 1–74 (MTEN…LPSQ) and 155–301 (NSVE…DDEK). The span at 10-20 (IPHEILPKEPF) shows a compositional bias: basic and acidic residues. 2 stretches are compositionally biased toward polar residues: residues 54-63 (ALSNPETNAN) and 155-171 (NSVEPQMENTANITIVS). The segment covering 175 to 186 (KESDFESEEKAT) has biased composition (basic and acidic residues). Polar residues predominate over residues 187-196 (NDNNGLIETN). Serine 204 bears the Phosphoserine mark. The segment covering 205–215 (SEHEEEEDEES) has biased composition (acidic residues). Basic and acidic residues-rich tracts occupy residues 216 to 227 (NIERTEDSDHQI) and 282 to 301 (REIADRRSASEQAHEADDEK). Phosphoserine is present on serine 223.

Component of the RPD3C(L) complex.

It is found in the nucleus. In terms of biological role, component of the RPD3C(L) histone deacetylase complex (HDAC) responsible for the deacetylation of lysine residues on the N-terminal part of the core histones (H2A, H2B, H3 and H4). Histone deacetylation gives a tag for epigenetic repression and plays an important role in transcriptional regulation, cell cycle progression and developmental events. The protein is Transcriptional regulatory protein dep1 (dep1) of Schizosaccharomyces pombe (strain 972 / ATCC 24843) (Fission yeast).